The chain runs to 243 residues: Large ribosomal subunit protein uL2 (243 aa).

Residues 202 to 243 (HGGGRHQHVGQSSTVSRNAPPGAKVGSIAARKTGRAKIKDRR) are disordered. Positions 233 to 243 (KTGRAKIKDRR) are enriched in basic residues.

This sequence belongs to the universal ribosomal protein uL2 family. As to quaternary structure, part of the 50S ribosomal subunit. Forms a bridge to the 30S subunit in the 70S ribosome.

Its function is as follows. One of the primary rRNA binding proteins. Required for association of the 30S and 50S subunits to form the 70S ribosome, for tRNA binding and peptide bond formation. It has been suggested to have peptidyltransferase activity; this is somewhat controversial. Makes several contacts with the 16S rRNA in the 70S ribosome. This is Large ribosomal subunit protein uL2 from Cenarchaeum symbiosum (strain A).